Here is a 344-residue protein sequence, read N- to C-terminus: Lipase chaperone (344 aa).

The chain crosses the membrane as a helical span at residues 14 to 34; it reads AAIYGGVGLAAVAGVAMWSGA.

Belongs to the lipase chaperone family.

It localises to the cell inner membrane. May be involved in the folding of the extracellular lipase during its passage through the periplasm. In Burkholderia cenocepacia (strain ATCC BAA-245 / DSM 16553 / LMG 16656 / NCTC 13227 / J2315 / CF5610) (Burkholderia cepacia (strain J2315)), this protein is Lipase chaperone.